Here is a 281-residue protein sequence, read N- to C-terminus: ATP synthase gamma chain (281 aa).

Belongs to the ATPase gamma chain family. F-type ATPases have 2 components, CF(1) - the catalytic core - and CF(0) - the membrane proton channel. CF(1) has five subunits: alpha(3), beta(3), gamma(1), delta(1), epsilon(1). CF(0) has three main subunits: a, b and c.

Its subcellular location is the cell inner membrane. Its function is as follows. Produces ATP from ADP in the presence of a proton gradient across the membrane. The gamma chain is believed to be important in regulating ATPase activity and the flow of protons through the CF(0) complex. The polypeptide is ATP synthase gamma chain (Ehrlichia canis (strain Jake)).